Consider the following 2548-residue polypeptide: MEYKLFKNKKILNEKVNELTKKNRQRNTLDHINCIEIDDDDDDDNDNNEEPKEMNINKTNNNNNDILMKSCNDIRRNTTFYRHNVINEEQKNFEYLLSRKKKNVDSIDNVNFYDFMKNDFFNIFNNNIISEHKKTNQIVNQINNNVDTSKNVVYNINYDEHKGEVVNLSFDKKGKETYPQVDIELYNKKMNPRYQNINEQNTCQTSDDNTTYRNVYSDNCALNSSYTNFLRNKSLKYKKCYKQNRQDESTGAEFDYNLDESVYYDDCNNKLYKRSFLKNNKNIIEKGREEHKQDIYNNISDICKSYIKNFDYLNKRIFHNKSKIWKLSNKKVTIHGDPKKRIERNKQEIEDHRREQDGENDQEEDNYDDYDDEDDDDDNCHIYDNYDDYLENDDYDNHNYFYHKNHDVNKIRKIQNKNCSTDFINYTSINNRNMECPNKNADNLKNMDSFLLYMKERKIKKKKNINDHMENQLSDTLNNSNNYNKDVYDSYYDDMNFCYDKDYNMILKKGVNSNRTKSLDRYPNNISHNYVNNISSEIIKYCKDNNITLKSDIKNIINHFNKKYANSSLTNSKISMYENGYPQRSVDRIYDSSTNDPKSDMNGSNNNNSSSNNNNNITHITNDCDNTQTNKNKHYVNSIVNSIVNIFQKRKNVNEKKENINEQNCISFNTNLRNNKLNNNDDLCSNSYVNNINRNKQITNNENKKDNMLMLKGTYHGDSLNESINIEHNLKNNNSMSDVNFVLNNNDNDKKQNSYDISEVSINCYYDDVIKCYMDYTMHGMEDETNFYLCEFCEQNIFDMNNMIKKDKAKECMYRCNISCGRTFHKACVCYIKNNDNYICFFCLYDINFCTLCKEVLTNDSLLPCYYPLCSVSMHTKCVEKLLLFNSHCLKQYESIILPRDINIEQQKNTQKSASDGIIEQPLNIKKKIKRRHIYRKRRRRGPRKSQITTSNKKINKSELAGGSIINGVDMEQENDQGGNNNNNDDNNDDNNDNNDDNNDNNDDNNDNNDNNDDNNNDNNNNNNNDNNDNNNNNNNNNNNNDNDNNNNNNCDENFKNHLLKKDLLRDEPHHNNYDKILECNTEIKMENNVNMSEEPIYNKLFNGKEETLNNENDEKIIVLKKFICPLHICYVCKEFDINNTESSKKELKNNLFRCIKCYKSVHRKCMNQLKNNDNNDNDNNNNNINIYIISHKHRIICCANHMDDYKKEHMEYLKYIKEVKDICKLDEPIHNNNNNNNILSEKGFYGDENNLSISKFHNNSSYEPIKNKETCIKGKDSNYLSHDNKGITDMNNTNKMNVLNLKSCMVNDMNTSERKKKKSCESRGSNITNKKVVFDLTDELNEKEKSPPLDNVQNKIIYGDNEIEKNVNICQKEDGGLNLGSMNILSIGKNHMRTNNNNNNDSSCSSNNNIISVENEYILKNKNLNKSNNSLLDHNNKIKKNSTLNIKECTDSCINVDEFINKNQNEKDISLENIDALCIKRKRNVSHPYNDTLDDTNILKDISNNKSYYVNISKKKRNVSFNYKEEFMKGDEQFLLKGNNLESNEKNTKNKLCNNDNNNNNNNKGKNTKYNTLDRKNNKNKQINDTINKEPENINHNMQNQQLTDNFVEDNMKYKQEIYHIKLSHILSIEKGLLSLQEINIDQMNDECKKHISILCTFRQDFINYVIFLFSKRLHKENQIEPVNGVDHKKEGNIYHAERKQEKINHNAKHNEQGSINNAKHNEQGSINNAKHNEQDSINNAKQNEQDSINNAKHNEQDSINNAKHNEQDSINNAKHNEDDSLNNAKHNEDDSLNNAKQNEEDSLNNAKQNEEDILNNDDHRNQEELHERWKENMVYNFLANYDKKEKKYISKKEEDAIIKILSNDIVGIMKKELKISLYDFIMLKKKTISTNENHKDNDESVVYVEDGKHHCNDINKMKDNVNNDIIPNIKYNNNNYDDVINTKEKESIPDASYMKVTRNQSIMNNDIYNNNIQIIEKERIMNNNKKNYYDEEKKREEYNGLFSKGKKKSFKNNKMDLKTFFSLTNNGYKVDISILKKYSSFLKFEYISKNIYLNDKNKNLLACKSDDYKCLCQGECNLYTCYNSLSNIQCSKSRCNLPEKIQDRKCFNRPFRKSFVKDLEIKKTEKTGYGVFCKRDIKNGELICEYVGEVLGKREFEKRLEVYQEESKKTDMYNWYIIQINKDVYIDSGKKGSISRFINHSCSPNSVSQKWIVRGFYRIGIFALRDIPSGEEITYNYSYNFLFNNFECLCKSPNCMNYHLLKKGESSGASNIIKETELLNNTIFNPVENFHNLHGKMQDWNIFIEEAHTRLLYEYNKMNAFNLRLMECYSTWIFYDMNFQKNQFFSLKSKPYNVSAEFWKVLVSAFSDGEKNIINTFNLFLPSLIKIGQLRRIQQYSYILHNIIGLEHDMWNLIDKGFADDEVCRKCKSCGNLTMCDKCFQSYHQLCGNMHSKMYKNNELVLCRFCQKYDYKIQWIKENHGSKMKTCIEIRSKAFYKLNRDIMTLLEESVKYTQNQSLDSIHAHNTKAFKSKKLKLRKFQYKYVKI.

Residues 37 to 48 are compositionally biased toward acidic residues; it reads IDDDDDDDNDNN. Disordered stretches follow at residues 37-61, 336-379, and 585-629; these read IDDDDDDDNDNNEEPKEMNINKTNN, GDPK…DDDN, and SVDR…NTQT. Positions 336–357 are enriched in basic and acidic residues; that stretch reads GDPKKRIERNKQEIEDHRREQD. Residues 358–378 show a composition bias toward acidic residues; that stretch reads GENDQEEDNYDDYDDEDDDDD. Over residues 602-616 the composition is skewed to low complexity; the sequence is NGSNNNNSSSNNNNN. The span at 617–629 shows a compositional bias: polar residues; sequence ITHITNDCDNTQT. Residues 787 to 846 form a PHD-type 1 zinc finger; the sequence is FYLCEFCEQNIFDMNNMIKKDKAKECMYRCNISCGRTFHKACVCYIKNNDNYICFFCLYD. Over residues 929–944 the composition is skewed to basic residues; the sequence is IKRRHIYRKRRRRGPR. 4 disordered regions span residues 929 to 1054, 1546 to 1575, 1713 to 1732, and 1772 to 1822; these read IKRR…CDEN, EKNTKNKLCNNDNNNNNNNKGKNTKYNTLD, EQGSINNAKHNEQGSINNAK, and INNA…DDHR. Over residues 986-1016 the composition is skewed to acidic residues; that stretch reads DNNDDNNDNNDDNNDNNDDNNDNNDNNDDNN. Composition is skewed to low complexity over residues 1017–1050 and 1551–1572; these read NDNNNNNNNDNNDNNNNNNNNNNNNDNDNNNNNN and NKLCNNDNNNNNNNKGKNTKYN. Residues 1714-1732 are compositionally biased toward polar residues; the sequence is QGSINNAKHNEQGSINNAK. An AWS domain is found at 2067-2117; sequence SDDYKCLCQGECNLYTCYNSLSNIQCSKSRCNLPEKIQDRKCFNRPFRKSF. Residues 2119–2240 form the SET domain; that stretch reads KDLEIKKTEK…SGEEITYNYS (122 aa). Residue Tyr-2239 participates in S-adenosyl-L-methionine binding. Residues 2423–2471 form a PHD-type 2 zinc finger; it reads DEVCRKCKSCGNLTMCDKCFQSYHQLCGNMHSKMYKNNELVLCRFCQKY.

This sequence belongs to the class V-like SAM-binding methyltransferase superfamily.

The protein resides in the nucleus. Its subcellular location is the chromosome. The enzyme catalyses L-lysyl(36)-[histone H3] + 3 S-adenosyl-L-methionine = N(6),N(6),N(6)-trimethyl-L-lysyl(36)-[histone H3] + 3 S-adenosyl-L-homocysteine + 3 H(+). Histone methyltransferase that specifically represses expression of the surface antigen-coding var genes by mediating trimethylation of 'Lys-36' of histone H3 (H3K36me3) on var genes. SETVS-dependent H3K36me3 is specifically involved in var genes silencing, a central step malaria pathogenesis: each parasite contains 60 distinct var genes that each code for a different PfEMP1 protein. During infection, the clonal parasite population expresses only 1 gene at a time, while the 59 other var genes are silenced. The parasite then switches to the expression of a new variant antigen as an immune-evasion mechanism to avoid the host antibody response. Represses expression of both var mRNA and antisense long non-coding RNA. The chain is Variant-silencing SET domain-containing protein (SETVS) from Plasmodium falciparum (isolate 3D7).